Consider the following 596-residue polypeptide: MPTQRDSSTMSHTVACGGGGDHSHQVRVKAYYRGDIMITHFEPSISFEGLCSEVRDMCSFDNEQPFTMKWIDEEGDPCTVSSQLELEEAFRLYELNKDSELLIHVFPCVPERPGMPCPGEDKSIYRRGARRWRKLYCANGHTFQAKRFNRRAHCAICTDRIWGLGRQGYKCINCKLLVHKKCHKLVTIECGRHSLPPEPMMPMDQSSMHPDHTQTVIPYNPSSHESLDQVGEEKEAMNTRESGKASSSLGLQDFDLLRVIGRGSYAKVLLVRLKKTDRIYAMKVVKKELVNDDEDIDWVQTEKHVFEQASNHPFLVGLHSCFQTESRLFFVIEYVNGGDLMFHMQRQRKLPEEHARFYSAEISLALNYLHERGIIYRDLKLDNVLLDSEGHIKLTDYGMCKEGLRPGDTTSTFCGTPNYIAPEILRGEDYGFSVDWWALGVLMFEMMAGRSPFDIVGSSDNPDQNTEDYLFQVILEKQIRIPRSLSVKAASVLKSFLNKDPKERLGCHPQTGFADIQGHPFFRNVDWDMMEQKQVVPPFKPNISGEFGLDNFDSQFTNEPVQLTPDDDDIVRKIDQSEFEGFEYINPLLMSAEECV.

Residues 1-12 (MPTQRDSSTMSH) show a composition bias toward polar residues. Residues 1–21 (MPTQRDSSTMSHTVACGGGGD) are disordered. N-acetylproline is present on P2. Residues 2-28 (PTQRDSSTMSHTVACGGGGDHSHQVRV) form a required for interaction with RAB2 region. Residues 2 to 253 (PTQRDSSTMS…KASSSLGLQD (252 aa)) form a regulatory domain region. T3 carries the post-translational modification Phosphothreonine. 2 positions are modified to phosphoserine: S7 and S8. Position 9 is a phosphothreonine (T9). Residues 25–108 (QVRVKAYYRG…SELLIHVFPC (84 aa)) form the PB1 domain. The interval 72 to 91 (DEEGDPCTVSSQLELEEAFR) is interaction with PARD6A. Residues 125-134 (YRRGARRWRK) carry the Pseudosubstrate motif. The Phorbol-ester/DAG-type zinc finger occupies 140–190 (GHTFQAKRFNRRAHCAICTDRIWGLGRQGYKCINCKLLVHKKCHKLVTIEC). One can recognise a Protein kinase domain in the interval 254–522 (FDLLRVIGRG…FADIQGHPFF (269 aa)). 260–268 (IGRGSYAKV) is an ATP binding site. Phosphotyrosine; by SRC is present on residues Y265 and Y280. K283 serves as a coordination point for ATP. Y334 carries the phosphotyrosine; by SRC modification. The active-site Proton acceptor is D378. Residue T412 is modified to Phosphothreonine; by PDPK1. The AGC-kinase C-terminal domain occupies 523–594 (RNVDWDMMEQ…INPLLMSAEE (72 aa)). Position 564 is a phosphothreonine (T564).

The protein belongs to the protein kinase superfamily. AGC Ser/Thr protein kinase family. PKC subfamily. Forms a complex with SQSTM1 and MP2K5. Interacts directly with SQSTM1. Interacts with IKBKB. Interacts with PARD6A, PARD6B and PARD6G. Part of a quaternary complex containing aPKC, PARD3, a PARD6 protein (PARD6A, PARD6B or PARD6G) and a GTPase protein (CDC42 or RAC1). Part of a complex with LLGL1 and PARD6B. Interacts with ADAP1/CENTA1. Interaction with SMG1, through the ZN-finger domain, activates the kinase activity. Interacts with CDK7. Forms a complex with RAB2A and GAPDH involved in recruitment onto the membrane of vesicular tubular clusters (VTCs). Interacts with ECT2 ('Thr-359' phosphorylated form). Interacts with VAMP2. Interacts with WDFY2 (via WD repeats 1-3). In terms of processing, phosphorylation at Thr-412 in the activation loop is not mandatory for activation. Upon neuronal growth factor (NGF) stimulation, phosphorylated by SRC at Tyr-265, Tyr-280 and Tyr-334. Phosphorylation at Tyr-265 facilitates binding to KPNB1/importin-beta regulating entry of PRKCI into the nucleus. Phosphorylation on Tyr-334 is important for NF-kappa-B stimulation. Phosphorylated at Thr-564 during the initial phase of long term potentiation. In terms of tissue distribution, expressed in dorsal hippocampus (at protein level).

The protein resides in the cytoplasm. Its subcellular location is the membrane. It is found in the endosome. The protein localises to the nucleus. The catalysed reaction is L-seryl-[protein] + ATP = O-phospho-L-seryl-[protein] + ADP + H(+). It carries out the reaction L-threonyl-[protein] + ATP = O-phospho-L-threonyl-[protein] + ADP + H(+). With respect to regulation, atypical PKCs (PRKCI and PRKCZ) exhibit an elevated basal enzymatic activity (that may be due to the interaction with SMG1 or SQSTM1) and are not regulated by diacylglycerol, phosphatidylserine, phorbol esters or calcium ions. Two specific sites, Thr-412 (activation loop of the kinase domain) and Thr-564 (turn motif), need to be phosphorylated for its full activation. Might also be a target for novel lipid activators that are elevated during nutrient-stimulated insulin secretion. Calcium- and diacylglycerol-independent serine/ threonine-protein kinase that plays a general protective role against apoptotic stimuli, is involved in NF-kappa-B activation, cell survival, differentiation and polarity, and contributes to the regulation of microtubule dynamics in the early secretory pathway. Is necessary for BCR-ABL oncogene-mediated resistance to apoptotic drug in leukemia cells, protecting leukemia cells against drug-induced apoptosis. In cultured neurons, prevents amyloid beta protein-induced apoptosis by interrupting cell death process at a very early step. In glioblastoma cells, may function downstream of phosphatidylinositol 3-kinase (PI3K) and PDPK1 in the promotion of cell survival by phosphorylating and inhibiting the pro-apoptotic factor BAD. Can form a protein complex in non-small cell lung cancer (NSCLC) cells with PARD6A and ECT2 and regulate ECT2 oncogenic activity by phosphorylation, which in turn promotes transformed growth and invasion. In response to nerve growth factor (NGF), acts downstream of SRC to phosphorylate and activate IRAK1, allowing the subsequent activation of NF-kappa-B and neuronal cell survival. Functions in the organization of the apical domain in epithelial cells by phosphorylating EZR. This step is crucial for activation and normal distribution of EZR at the early stages of intestinal epithelial cell differentiation. Forms a protein complex with LLGL1 and PARD6B independently of PARD3 to regulate epithelial cell polarity. Plays a role in microtubule dynamics in the early secretory pathway through interaction with RAB2A and GAPDH and recruitment to vesicular tubular clusters (VTCs). In human coronary artery endothelial cells (HCAEC), is activated by saturated fatty acids and mediates lipid-induced apoptosis. Downstream of PI3K is required for insulin-stimulated glucose transport. Activates RAB4A and promotes its association with KIF3A which is required for the insulin-induced SLC2A4/GLUT4 translocation in adipocytes. Is essential in early embryogenesis and development of differentiating photoreceptors by playing a role in the establishment of epithelial and neuronal polarity. Involved in early synaptic long term potentiation phase in CA1 hippocampal cells and short term memory formation. The polypeptide is Protein kinase C iota type (Prkci) (Rattus norvegicus (Rat)).